A 128-amino-acid polypeptide reads, in one-letter code: Spore germination protein 1/2/3-related protein (128 aa).

The first 26 residues, 1-26, serve as a signal peptide directing secretion; the sequence is MNIRNTLVLLVSTVLVLMSCSIGCYA. Residues Asn55 and Asn119 are each glycosylated (N-linked (GlcNAc...) asparagine).

It belongs to the Dictyostelium gerABC family.

It is found in the secreted. In Dictyostelium discoideum (Social amoeba), this protein is Spore germination protein 1/2/3-related protein.